The chain runs to 556 residues: Potassium-transporting ATPase potassium-binding subunit (556 aa).

The next 12 helical transmembrane spans lie at 3–23 (AHGV…TPIL), 57–77 (AAYA…LYAL), 129–149 (GLTV…VALM), 172–192 (LGLL…QGVP), 247–267 (LVNL…TNTF), 278–298 (WALL…AWWA), 319–339 (LGVA…CGAV), 346–366 (LLPL…VVVG), 371–391 (GLYG…LMVG), 408–428 (LAVI…GLAI), 486–506 (FVVM…MAVP), and 516–536 (GWLF…LTYF).

This sequence belongs to the KdpA family. The system is composed of three essential subunits: KdpA, KdpB and KdpC.

It is found in the cell inner membrane. In terms of biological role, part of the high-affinity ATP-driven potassium transport (or Kdp) system, which catalyzes the hydrolysis of ATP coupled with the electrogenic transport of potassium into the cytoplasm. This subunit binds the periplasmic potassium ions and delivers the ions to the membrane domain of KdpB through an intramembrane tunnel. The polypeptide is Potassium-transporting ATPase potassium-binding subunit (Paramagnetospirillum magneticum (strain ATCC 700264 / AMB-1) (Magnetospirillum magneticum)).